The chain runs to 692 residues: Formate hydrogenlyase transcriptional activator (692 aa).

Positions 202–344 (DIDELVSEVA…QIAERVAIAV (143 aa)) constitute a GAF domain. Positions 381-610 (IIGRSEAMYN…LENVVERAVL (230 aa)) constitute a Sigma-54 factor interaction domain. ATP-binding positions include 409–416 (GETGTGKE) and 472–481 (ADKSSLFLDE). Positions 663-682 (PKGAAQRLGLKRTTLLSRMK) form a DNA-binding region, H-T-H motif.

Required for induction of expression of the formate dehydrogenase H and hydrogenase-3 structural genes. This is Formate hydrogenlyase transcriptional activator (fhlA) from Salmonella typhimurium (strain SL1344).